A 1169-amino-acid chain; its full sequence is DNA-directed RNA polymerase subunit beta (1169 aa).

It belongs to the RNA polymerase beta chain family. As to quaternary structure, the RNAP catalytic core consists of 2 alpha, 1 beta, 1 beta' and 1 omega subunit. When a sigma factor is associated with the core the holoenzyme is formed, which can initiate transcription. Interacts with RbpA, which partially restores Rif-inhibited transcription.

It carries out the reaction RNA(n) + a ribonucleoside 5'-triphosphate = RNA(n+1) + diphosphate. Functionally, DNA-dependent RNA polymerase catalyzes the transcription of DNA into RNA using the four ribonucleoside triphosphates as substrates. This subunit often mutates to generate rifampicin (Rif) resistance. Interaction with RbpA partially restores Rif-inhibited transcription; once the subunit is Rif-resistant however RbpA no longer stimulates transcription. In Mycolicibacterium smegmatis (strain ATCC 700084 / mc(2)155) (Mycobacterium smegmatis), this protein is DNA-directed RNA polymerase subunit beta.